The chain runs to 920 residues: Bifunctional aspartokinase/homoserine dehydrogenase 1, chloroplastic (920 aa).

The segment at 1 to 21 (MRSLTVASRHPGAAFSTRRRP) is disordered. The transit peptide at 1–92 (MRSLTVASRH…EAIADLPKGD (92 aa)) directs the protein to the chloroplast. An aspartokinase region spans residues 93–341 (MWSVHKFGGT…VSEAVILSTL (249 aa)). The segment at 342–566 (SYQEAWEMSY…LSKTTLAVGI (225 aa)) is interface. ACT domains are found at residues 416-491 (VEGT…VIHN) and 497-574 (TVGL…LIGR). A homoserine dehydrogenase region spans residues 567–920 (IGPGLIGRTL…RLSSYLGAPS (354 aa)). Positions 572 and 601 each coordinate NAD(+). NADP(+) is bound at residue I572. An NADPH-binding site is contributed by I572. Residues R604, T653, and K677 each contribute to the NADP(+) site. T653 provides a ligand contact to NAD(+). The NADPH site is built by T653 and K677. Na(+)-binding residues include E704, V707, A709, and L711. The NADP(+) site is built by G762 and E765. L-homoserine-binding residues include E765 and D776. K780 acts as the Proton donor in catalysis. G897 serves as a coordination point for NAD(+). NADP(+) is bound at residue G897. G897 lines the NADPH pocket.

It in the N-terminal section; belongs to the aspartokinase family. This sequence in the C-terminal section; belongs to the homoserine dehydrogenase family. As to quaternary structure, homo- or heterodimer. A metal cation is required as a cofactor.

The protein localises to the plastid. The protein resides in the chloroplast. The enzyme catalyses L-homoserine + NADP(+) = L-aspartate 4-semialdehyde + NADPH + H(+). The catalysed reaction is L-homoserine + NAD(+) = L-aspartate 4-semialdehyde + NADH + H(+). It carries out the reaction L-aspartate + ATP = 4-phospho-L-aspartate + ADP. The protein operates within amino-acid biosynthesis; L-lysine biosynthesis via DAP pathway; (S)-tetrahydrodipicolinate from L-aspartate: step 1/4. Its pathway is amino-acid biosynthesis; L-methionine biosynthesis via de novo pathway; L-homoserine from L-aspartate: step 1/3. It functions in the pathway amino-acid biosynthesis; L-methionine biosynthesis via de novo pathway; L-homoserine from L-aspartate: step 3/3. It participates in amino-acid biosynthesis; L-threonine biosynthesis; L-threonine from L-aspartate: step 1/5. The protein operates within amino-acid biosynthesis; L-threonine biosynthesis; L-threonine from L-aspartate: step 3/5. In terms of biological role, bifunctional aspartate kinase and homoserine dehydrogenase that catalyzes the first and the third steps toward the synthesis of lysine, methionine and threonine from aspartate. This chain is Bifunctional aspartokinase/homoserine dehydrogenase 1, chloroplastic (AKHSDH1), found in Zea mays (Maize).